A 369-amino-acid chain; its full sequence is Tyrosyl-DNA phosphodiesterase 2 (369 aa).

Basic and acidic residues predominate over residues 1–17; the sequence is MELEARAEPRSPRAGRG. Disordered regions lie at residues 1–26 and 80–117; these read MELE…EDEE and AAAA…QQDD. Positions 99–112 are enriched in low complexity; that stretch reads DDTASNTSSSGADS. Residues 127–131 form an interaction with 5' end of substrate DNA region; the sequence is NIDGL. Residues D129 and E159 each contribute to the Mg(2+) site. The tract at residues 233–238 is interaction with 5' end of substrate DNA; sequence HLESTR. D269 serves as the catalytic Proton donor/acceptor. The interaction with 5' end of substrate DNA stretch occupies residues 271 to 273; sequence NLR.

It belongs to the CCR4/nocturin family. TTRAP/TDP2 subfamily. The cofactor is Mg(2+). It depends on Mn(2+) as a cofactor.

It is found in the nucleus. The protein resides in the PML body. Functionally, DNA repair enzyme that can remove a variety of covalent adducts from DNA through hydrolysis of a 5'-phosphodiester bond, giving rise to DNA with a free 5' phosphate. Catalyzes the hydrolysis of dead-end complexes between DNA and the topoisomerase 2 (TOP2) active site tyrosine residue. Hydrolyzes 5'-phosphoglycolates on protruding 5' ends on DNA double-strand breaks (DSBs) due to DNA damage by radiation and free radicals. The 5'-tyrosyl DNA phosphodiesterase activity can enable the repair of TOP2-induced DSBs without the need for nuclease activity, creating a 'clean' DSB with 5'-phosphate termini that are ready for ligation. Also has 3'-tyrosyl DNA phosphodiesterase activity, but less efficiently and much slower than TDP1. The protein is Tyrosyl-DNA phosphodiesterase 2 (TDP2) of Gallus gallus (Chicken).